The chain runs to 396 residues: Probable sugar efflux transporter (396 aa).

Transmembrane regions (helical) follow at residues 15–35, 50–70, 81–101, 103–123, 136–156, 170–190, 209–229, 246–266, 275–295, 299–319, 333–353, and 364–384; these read VVTLAVAAFIFNTTEFVPVGL, VGIMLTIYAWVVALMSLPFML, LICLFVVFIASHVLSFLSWSF, VLVISRIGVAFAHAIFWSITA, AQALSLIATGTALAMVLGLPL, FFAIGIGAFITLLCLIKLLPL, PALMSIYLLTVVVVTAHYTAY, FATALLLLLGGAGIIGSVIFG, ALVSTAIALLLVCLALLLPAA, IHLGVLSIFWGIAMMIIGLGM, VAMALFSGIFNIGIGAGALVG, and MIGYVGAVPAFAALIWSIIIF.

This sequence belongs to the major facilitator superfamily. SotB (TC 2.A.1.2) family.

Its subcellular location is the cell inner membrane. Involved in the efflux of sugars. The physiological role may be the reduction of the intracellular concentration of toxic sugars or sugar metabolites. In Escherichia coli O17:K52:H18 (strain UMN026 / ExPEC), this protein is Probable sugar efflux transporter.